The primary structure comprises 382 residues: Cytoplasmic tRNA 2-thiolation protein 2 (382 aa).

Belongs to the CTU2/NCS2 family.

The protein localises to the cytoplasm. It functions in the pathway tRNA modification; 5-methoxycarbonylmethyl-2-thiouridine-tRNA biosynthesis. Its function is as follows. Plays a central role in 2-thiolation of mcm(5)S(2)U at tRNA wobble positions of tRNA(Lys), tRNA(Glu) and tRNA(Gln). May act by forming a heterodimer with NCS6 that ligates sulfur from thiocarboxylated URM1 onto the uridine of tRNAs at wobble position. Prior mcm(5) tRNA modification by the elongator complex is required for 2-thiolation. May also be involved in protein urmylation. This Phaeosphaeria nodorum (strain SN15 / ATCC MYA-4574 / FGSC 10173) (Glume blotch fungus) protein is Cytoplasmic tRNA 2-thiolation protein 2.